Here is a 305-residue protein sequence, read N- to C-terminus: Ribonuclease BN (305 aa).

7 residues coordinate Zn(2+): histidine 63, histidine 65, aspartate 67, histidine 68, histidine 141, aspartate 212, and histidine 270. The Proton acceptor role is filled by aspartate 67.

This sequence belongs to the RNase Z family. RNase BN subfamily. Homodimer. Requires Zn(2+) as cofactor.

In terms of biological role, zinc phosphodiesterase, which has both exoribonuclease and endoribonuclease activities. This Proteus mirabilis (strain HI4320) protein is Ribonuclease BN.